The chain runs to 212 residues: Large ribosomal subunit protein uL3 (212 aa).

Position 153 is an N5-methylglutamine (Gln-153).

Belongs to the universal ribosomal protein uL3 family. In terms of assembly, part of the 50S ribosomal subunit. Forms a cluster with proteins L14 and L19. In terms of processing, methylated by PrmB.

Functionally, one of the primary rRNA binding proteins, it binds directly near the 3'-end of the 23S rRNA, where it nucleates assembly of the 50S subunit. The chain is Large ribosomal subunit protein uL3 from Acinetobacter baylyi (strain ATCC 33305 / BD413 / ADP1).